The primary structure comprises 344 residues: MLTEQQTLELFPENWERNEQVLLKYPDGLPKDVLADQRVDNTESQVKDEITSNITNQTQILLPADSFPQYGSYPNNSELDYVVCTKCDRPFLSEYIEDHHSSCNGIKPPKPQFEPVANSQVLNKDVNNGNNAPIKNGVKSTAKGSAGNHEKNSVNGQKNPEMPPKRRKTEENKKPTKSALPKKEASKKKNPKVKGPVDVEKQCGVLLPNGQMCARSLTCKTHSMSSKRAVPGRSQPYDVLLAACQKKNQVKIQRQILETAKESEDNQHQAPVDSDEEVSFIMNVLQKSGNQPLEQKVFLPVKRRHSYFRTRELIAAAFRHGEQGMQVTGTILGRVIPFSARQPL.

A compositionally biased stretch (polar residues) spans 123–143 (NKDVNNGNNAPIKNGVKSTAK). The disordered stretch occupies residues 123–196 (NKDVNNGNNA…KKKNPKVKGP (74 aa)). Residues 190–256 (NPKVKGPVDV…KNQVKIQRQI (67 aa)) form the SCA7 domain.

It belongs to the ataxin-7 family. In terms of assembly, component of the 1.8 MDa SAGA (Spt-Ada-Gcn5 acetyltransferase) complex, which is composed of 19 subunits tra1, spt7, taf5, ngg1/ada3, sgf73, spt20, spt8, taf12, taf6, hfi1/ada1, ubp8, gcn5, ada2, spt3, sgf29, taf10, taf9, sgf11 and sus1. The SAGA complex is composed of 4 modules, namely the HAT (histone acetyltransferase) module (gcn5, ada2, ngg1/ada3 and sgf29), the DUB (deubiquitinating) module (ubp8, sgf11, sgf73 and sus1), the core or TAF (TBP-associated factor) module (taf5, taf6, taf9, taf10 and taf12), and the Tra1 or SPT (Suppressor of Ty) module (tra1, hfi1/ada1, spt3, spt7, spt8 and spt20). The Tra1/SPT module binds activators, the core module recruits TBP (TATA-binding protein), the HAT module contains the histone H3 acetyltransferase gcn5, and the DUB module comprises the histone H2B deubiquitinase ubp8. Interacts with the RITS subunits ago1 and chp1.

It localises to the nucleus. In terms of biological role, component of the transcription coactivator SAGA complex. SAGA acts as a general cofactor required for essentially all RNA polymerase II transcription. At the promoters, SAGA is required for transcription pre-initiation complex (PIC) recruitment. It influences RNA polymerase II transcriptional activity through different activities such as TBP interaction (via core/TAF module) and promoter selectivity, interaction with transcription activators (via Tra1/SPT module), and chromatin modification through histone acetylation (via HAT module) and deubiquitination (via DUB module). SAGA preferentially acetylates histones H3 (to form H3K9ac, H3K14ac, H3K18ac and H3K23ac) and H2B and deubiquitinates histone H2B. SAGA interacts with DNA via upstream activating sequences (UASs). Sgf73 tethers the DUB module to the rest of the SAGA complex through its central domain and activates the ubiquitin hydrolase ubp8 by maintaining its catalytic domain in an active conformation. Sgf73 mediates recruitment of the TREX-2 mRNA export factors sac3 and thp1 to SAGA, which is crucial to target TREX-2 to the nuclear pore complex (NPC) necessary for export of mRNA. Upon environmental stress, involved in the bypass of the canonical mRNA export process for the immediate export of stress-related transcripts to maintain proteostasis. Independent on its function in SAGA, promotes the assembly of the RNA-induced transcriptional silencing complex (RITS) and is required for pericentromeric heterochromatin silencing and the generation of siRNA. This Schizosaccharomyces pombe (strain 972 / ATCC 24843) (Fission yeast) protein is SAGA complex subunit Sgf73 (sgf73).